The primary structure comprises 315 residues: 4-diphosphocytidyl-2-C-methyl-D-erythritol kinase (315 aa).

Lys-26 is an active-site residue. ATP is bound at residue 111 to 121 (PLAGGLAGGSA). Asp-153 is an active-site residue.

This sequence belongs to the GHMP kinase family. IspE subfamily.

It carries out the reaction 4-CDP-2-C-methyl-D-erythritol + ATP = 4-CDP-2-C-methyl-D-erythritol 2-phosphate + ADP + H(+). The protein operates within isoprenoid biosynthesis; isopentenyl diphosphate biosynthesis via DXP pathway; isopentenyl diphosphate from 1-deoxy-D-xylulose 5-phosphate: step 3/6. In terms of biological role, catalyzes the phosphorylation of the position 2 hydroxy group of 4-diphosphocytidyl-2C-methyl-D-erythritol. This Salinispora tropica (strain ATCC BAA-916 / DSM 44818 / JCM 13857 / NBRC 105044 / CNB-440) protein is 4-diphosphocytidyl-2-C-methyl-D-erythritol kinase.